Here is a 98-residue protein sequence, read N- to C-terminus: Citrate lyase acyl carrier protein (98 aa).

At Ser14 the chain carries O-(phosphoribosyl dephospho-coenzyme A)serine.

It belongs to the CitD family. In terms of assembly, oligomer with a subunit composition of (alpha,beta,gamma)6.

The protein localises to the cytoplasm. Functionally, covalent carrier of the coenzyme of citrate lyase. The chain is Citrate lyase acyl carrier protein from Vibrio cholerae serotype O1 (strain ATCC 39541 / Classical Ogawa 395 / O395).